The sequence spans 100 residues: Putative pterin-4-alpha-carbinolamine dehydratase 2 (100 aa).

It belongs to the pterin-4-alpha-carbinolamine dehydratase family.

It carries out the reaction (4aS,6R)-4a-hydroxy-L-erythro-5,6,7,8-tetrahydrobiopterin = (6R)-L-erythro-6,7-dihydrobiopterin + H2O. This Cupriavidus pinatubonensis (strain JMP 134 / LMG 1197) (Cupriavidus necator (strain JMP 134)) protein is Putative pterin-4-alpha-carbinolamine dehydratase 2.